The following is a 391-amino-acid chain: Mannose-6-phosphate isomerase (391 aa).

Positions 97, 99, 134, and 255 each coordinate Zn(2+). Residue arginine 274 is part of the active site. The residue at position 280 (lysine 280) is an N6-acetyllysine.

Belongs to the mannose-6-phosphate isomerase type 1 family. Zn(2+) serves as cofactor.

The protein localises to the cytoplasm. The enzyme catalyses D-mannose 6-phosphate = D-fructose 6-phosphate. Its function is as follows. Involved in the conversion of glucose to GDP-L-fucose, which can be converted to L-fucose, a capsular polysaccharide. The chain is Mannose-6-phosphate isomerase (manA) from Escherichia coli (strain K12).